The sequence spans 604 residues: Serine/threonine-protein phosphatase 2B catalytic subunit A2 (604 aa).

The tract at residues 21-48 (NKTERPQSSTTPIDSKASTVAAANSTAT) is disordered. At T31 the chain carries Phosphothreonine. The segment covering 35-48 (SKASTVAAANSTAT) has biased composition (low complexity). Positions 144, 146, and 172 each coordinate Fe cation. D172 and N204 together coordinate Zn(2+). The Proton donor role is filled by H205. Zn(2+) is bound by residues H253 and H359. The segment at 470-497 (KKLPQAGKSEATPQPATSASPKHASILD) is disordered. Over residues 480 to 489 (ATPQPATSAS) the composition is skewed to polar residues. 2 positions are modified to phosphoserine: S489 and S520. Residues 501–523 (RRKALRNKILAVAKVSRMYSVLR) are calmodulin-binding.

The protein belongs to the PPP phosphatase family. PP-2B subfamily. Composed of two components (A and B), the A component is the catalytic subunit and the B component confers calcium sensitivity. The cofactor is Fe(3+). Requires Zn(2+) as cofactor.

The enzyme catalyses O-phospho-L-seryl-[protein] + H2O = L-seryl-[protein] + phosphate. It catalyses the reaction O-phospho-L-threonyl-[protein] + H2O = L-threonyl-[protein] + phosphate. Functionally, calcium-dependent, calmodulin-stimulated protein phosphatase. This subunit may have a role in the calmodulin activation of calcineurin. The chain is Serine/threonine-protein phosphatase 2B catalytic subunit A2 (CMP2) from Saccharomyces cerevisiae (strain ATCC 204508 / S288c) (Baker's yeast).